Here is a 230-residue protein sequence, read N- to C-terminus: uncharacterized protein (230 aa).

7 helical membrane passes run 34 to 54 (FFAG…MNFQ), 56 to 76 (VVQY…GLMF), 87 to 107 (MLFA…GMVI), 111 to 131 (GLGA…LMSV), 146 to 166 (MLFI…FLGS), 167 to 187 (PMFQ…YIAY), and 205 to 225 (VSLY…IGIF).

The protein belongs to the BI1 family.

The protein resides in the cell membrane. This is an uncharacterized protein from Helicobacter pylori (strain J99 / ATCC 700824) (Campylobacter pylori J99).